Reading from the N-terminus, the 370-residue chain is tRNA 2-selenouridine synthase (370 aa).

One can recognise a Rhodanese domain in the interval 12 to 136 (FLDDVPMMDM…MRTFLLETTQ (125 aa)). Cys95 acts as the S-selanylcysteine intermediate in catalysis.

The protein belongs to the SelU family. Monomer.

The enzyme catalyses 5-methylaminomethyl-2-thiouridine(34) in tRNA + selenophosphate + (2E)-geranyl diphosphate + H2O + H(+) = 5-methylaminomethyl-2-selenouridine(34) in tRNA + (2E)-thiogeraniol + phosphate + diphosphate. The catalysed reaction is 5-methylaminomethyl-2-thiouridine(34) in tRNA + (2E)-geranyl diphosphate = 5-methylaminomethyl-S-(2E)-geranyl-thiouridine(34) in tRNA + diphosphate. It carries out the reaction 5-methylaminomethyl-S-(2E)-geranyl-thiouridine(34) in tRNA + selenophosphate + H(+) = 5-methylaminomethyl-2-(Se-phospho)selenouridine(34) in tRNA + (2E)-thiogeraniol. It catalyses the reaction 5-methylaminomethyl-2-(Se-phospho)selenouridine(34) in tRNA + H2O = 5-methylaminomethyl-2-selenouridine(34) in tRNA + phosphate. Involved in the post-transcriptional modification of the uridine at the wobble position (U34) of tRNA(Lys), tRNA(Glu) and tRNA(Gln). Catalyzes the conversion of 2-thiouridine (S2U-RNA) to 2-selenouridine (Se2U-RNA). Acts in a two-step process involving geranylation of 2-thiouridine (S2U) to S-geranyl-2-thiouridine (geS2U) and subsequent selenation of the latter derivative to 2-selenouridine (Se2U) in the tRNA chain. In Pseudomonas putida (strain GB-1), this protein is tRNA 2-selenouridine synthase.